We begin with the raw amino-acid sequence, 227 residues long: A-type potassium channel modulatory protein KCNIP1 (227 aa).

Positions 38–94 constitute an EF-hand 1; degenerate domain; the sequence is LEMTMVCHRPEGLEQLEAQTNFTKRELQVLYRGFKNECPSGVVNEETFKQIYAQFFP. EF-hand domains lie at 97 to 132, 133 to 168, and 181 to 216; these read DAST…LLRG, TVHE…IYDM, and TPRQ…DDNI. Aspartate 146, asparagine 148, aspartate 150, tyrosine 152, glutamate 157, aspartate 194, asparagine 196, aspartate 198, and glutamate 205 together coordinate Ca(2+). The interval 214 to 227 is interaction with KCND2; sequence DNIMRSLQLFQNVM.

The protein belongs to the recoverin family. In terms of assembly, component of heteromultimeric potassium channels. Identified in potassium channel complexes containing KCND1, KCND2, KCND3, KCNIP1, KCNIP2, KCNIP3, KCNIP4, DPP6 and DPP10. Part of a heterooctamer composed of the tetrameric channel and four KCNIP1 chains. Probably part of a complex consisting of KCNIP1, KCNIP2 isoform 3 and KCND2. Self-associates to form homodimers and homotetramers. Interacts with KCNIP2 isoform 3 in a calcium-dependent manner. Interacts with KCND2; this interaction mediates the capture of both the N- and C-terminus of KCND2, thus preventing KCND2 N-type inactivation and modulates the channel gating kinetics. Interacts with KCND3; each KCNIP1 monomer interacts with two adjacent KCND3 subunits, through both the N-terminal inactivation ball of a KCND3 subunit and a C-terminal helix from the adjacent KCND3 subunit, clamping them together; this interaction stabilizes the tetrameric form and modulates the channel gating kinetics namely channel activation and inactivation kinetics and rate of recovery from inactivation. Expressed in brain. Found in a subpopulation of neurons widely distributed and enriched in Purkinje cells of the cerebellum and in the reticular thalamic and medial habenular nuclei.

It localises to the cell membrane. Its subcellular location is the cytoplasm. It is found in the cell projection. The protein localises to the dendrite. Regulatory subunit of Kv4/D (Shal)-type voltage-gated rapidly inactivating A-type potassium channels. Regulates channel density, inactivation kinetics and rate of recovery from inactivation in a calcium-dependent and isoform-specific manner. Modulates KCND2/Kv4.2 currents. In vitro, modulates KCND1/Kv4.1 currents. Increases the presence of KCND2 at the cell surface. The sequence is that of A-type potassium channel modulatory protein KCNIP1 from Mus musculus (Mouse).